Reading from the N-terminus, the 286-residue chain is 4-diphosphocytidyl-2-C-methyl-D-erythritol kinase (286 aa).

Lys11 is a catalytic residue. 94 to 104 contributes to the ATP binding site; it reads PMGGGIGGGSS. Asp136 is a catalytic residue.

The protein belongs to the GHMP kinase family. IspE subfamily.

The catalysed reaction is 4-CDP-2-C-methyl-D-erythritol + ATP = 4-CDP-2-C-methyl-D-erythritol 2-phosphate + ADP + H(+). It participates in isoprenoid biosynthesis; isopentenyl diphosphate biosynthesis via DXP pathway; isopentenyl diphosphate from 1-deoxy-D-xylulose 5-phosphate: step 3/6. In terms of biological role, catalyzes the phosphorylation of the position 2 hydroxy group of 4-diphosphocytidyl-2C-methyl-D-erythritol. This is 4-diphosphocytidyl-2-C-methyl-D-erythritol kinase from Pseudomonas putida (strain ATCC 700007 / DSM 6899 / JCM 31910 / BCRC 17059 / LMG 24140 / F1).